We begin with the raw amino-acid sequence, 391 residues long: mRNA-capping enzyme subunit alpha (391 aa).

The active-site N6-GMP-lysine intermediate is the lysine 63. The disordered stretch occupies residues 363–391 (KERNRRPRDEDRKRVGGDDHDHGAKRARQ).

This sequence belongs to the eukaryotic GTase family. As to quaternary structure, heterodimer. The mRNA-capping enzyme is composed of two separate chains alpha and beta, respectively a mRNA guanylyltransferase and an mRNA 5'-triphosphate monophosphatase.

The protein resides in the nucleus. It carries out the reaction a 5'-end diphospho-ribonucleoside in mRNA + GTP + H(+) = a 5'-end (5'-triphosphoguanosine)-ribonucleoside in mRNA + diphosphate. Its function is as follows. Second step of mRNA capping. Transfer of the GMP moiety of GTP to the 5'-end of RNA via an enzyme-GMP covalent reaction intermediate. The polypeptide is mRNA-capping enzyme subunit alpha (CEG1) (Yarrowia lipolytica (strain CLIB 122 / E 150) (Yeast)).